A 792-amino-acid chain; its full sequence is MAARGSCVSRQRQVLFLFLLGGLCLAGSELGRYSVTEETERGSFVANLAKDLGLGVEALAAKRTRVVCDDNKQHLFLDSHTGDLLTNEKLDREKLCGPTEPCMLYFQILMDNPFQIYRAELRILDINDHSPIFQDKKMILKILENTAVGTTFRLERAQDSDGGRNGIQNYTISPNTFFHITVHNSDEGMIYPELVLDKALDWEGQPEFSLTLTALDGGSPPRSGTATIHILVLDINDNAPQFPQELYEIQAPENSPIGLVVIKVTGEDVDSGVNAEISYSFFDASEDIRATFQINPFSGEITLKALLDYEFIKSYKLNVQAVDGGGLSARCTVLVRVLDVNDNAPELIMSSLVNEVVENSPETVLAVFRINDRDSGENGKMVCHIQENLPFLLKPSVDNFYILMTEGALDRESRAEYNITITVSDLGTPRLTTQHTIRVQVSDINDNAPAFNQTSYTLFVRENNSPAMHIGTISATDSDAGSNAHITYSLLPTQDLQMTLTSLVSINADNGQLFAIKALDYEALQAFEFHVGATDRGSPELSSQALVRVVVLDDNDNAPFVLYPMQNASAPYTELLPRTAEPGYLVTKVVAVDRDSGQNAWLSFQLLKATEPGLFSVWAHNGEVRTTRLLSERDVPKHRLLLLVKDNGDPPRSASVTLQVLLVDGFSQPYLPLPEVAHNPTQGEEDVLTLYLVIALASVSSLFLLSVLLFVGVRLCRRARAASLGGCSVPEGHFPGHLVDVSGTGTLSQNYQYEVCLMGGSSGTSDFKFLKSIYPEVHAYSSQDNSDGNPTF.

Positions 1–26 (MAARGSCVSRQRQVLFLFLLGGLCLA) are cleaved as a signal peptide. Cadherin domains follow at residues 27–133 (GSEL…SPIF), 134–242 (QDKK…APQF), 243–347 (PQEL…APEL), 348–451 (IMSS…APAF), 452–561 (NQTS…APFV), and 568–676 (ASAP…LPEV). A glycan (N-linked (GlcNAc...) asparagine) is linked at N169. 2 N-linked (GlcNAc...) asparagine glycosylation sites follow: N418 and N452. The chain crosses the membrane as a helical span at residues 693 to 713 (VIALASVSSLFLLSVLLFVGV).

Its subcellular location is the cell membrane. Functionally, potential calcium-dependent cell-adhesion protein. The sequence is that of Protocadherin beta-18 (Pcdhb18) from Mus musculus (Mouse).